The primary structure comprises 521 residues: GMP synthase [glutamine-hydrolyzing] (521 aa).

The region spanning 8 to 203 (KILILDFGAQ…VVDVCGCQTL (196 aa)) is the Glutamine amidotransferase type-1 domain. Cysteine 85 (nucleophile) is an active-site residue. Residues histidine 177 and glutamate 179 contribute to the active site. The 193-residue stretch at 204–396 (WTAANIIDDQ…LGLPRTMVYR (193 aa)) folds into the GMPS ATP-PPase domain. 231–237 (SGGVDSS) is a binding site for ATP.

Homodimer.

The catalysed reaction is XMP + L-glutamine + ATP + H2O = GMP + L-glutamate + AMP + diphosphate + 2 H(+). It participates in purine metabolism; GMP biosynthesis; GMP from XMP (L-Gln route): step 1/1. In terms of biological role, catalyzes the synthesis of GMP from XMP. The polypeptide is GMP synthase [glutamine-hydrolyzing] (Stenotrophomonas maltophilia (strain K279a)).